The sequence spans 347 residues: Phenylalanine--tRNA ligase alpha subunit (347 aa).

Residue Glu-265 coordinates Mg(2+).

It belongs to the class-II aminoacyl-tRNA synthetase family. Phe-tRNA synthetase alpha subunit type 1 subfamily. In terms of assembly, tetramer of two alpha and two beta subunits. Requires Mg(2+) as cofactor.

The protein localises to the cytoplasm. It carries out the reaction tRNA(Phe) + L-phenylalanine + ATP = L-phenylalanyl-tRNA(Phe) + AMP + diphosphate + H(+). This Wolbachia sp. subsp. Drosophila simulans (strain wRi) protein is Phenylalanine--tRNA ligase alpha subunit.